We begin with the raw amino-acid sequence, 421 residues long: Lipid II:glycine glycyltransferase (421 aa).

It belongs to the FemABX family. Monomer.

The protein localises to the cytoplasm. The enzyme catalyses beta-D-GlcNAc-(1-&gt;4)-Mur2Ac(oyl-L-Ala-D-isoglutaminyl-L-Lys-D-Ala-D-Ala)-di-trans,octa-cis-undecaprenyl diphosphate + glycyl-tRNA(Gly) = beta-D-GlcNAc-(1-&gt;4)-Mur2Ac(oyl-L-Ala-D-isoglutaminyl-L-Lys-(N(6)-Gly)-D-Ala-D-Ala)-di-trans,octa-cis-undecaprenyl diphosphate + tRNA(Gly) + H(+). Catalyzes the incorporation of the first glycine of the pentaglycine interpeptide bridge, which is characteristic of the S.aureus peptidoglycan. This glycine is added to the epsilon-amino group of the L-lysine of the membrane-bound lipid II intermediate (GlcNAc-(beta-1,4)-N-acetylmuramic acid(-L-Ala-D-iGln-L-Lys-D-Ala-D-Ala)-pyrophosphoryl-undecaprenol), using glycyl-tRNA(Gly) as donor, in a ribosome-independent mechanism. Involved in methicillin resistance. The protein is Lipid II:glycine glycyltransferase (femX) of Staphylococcus aureus (strain Mu50 / ATCC 700699).